We begin with the raw amino-acid sequence, 728 residues long: 1,4-alpha-glucan branching enzyme GlgB (728 aa).

Asp405 serves as the catalytic Nucleophile. Glu458 functions as the Proton donor in the catalytic mechanism.

Belongs to the glycosyl hydrolase 13 family. GlgB subfamily. Monomer.

It carries out the reaction Transfers a segment of a (1-&gt;4)-alpha-D-glucan chain to a primary hydroxy group in a similar glucan chain.. The protein operates within glycan biosynthesis; glycogen biosynthesis. In terms of biological role, catalyzes the formation of the alpha-1,6-glucosidic linkages in glycogen by scission of a 1,4-alpha-linked oligosaccharide from growing alpha-1,4-glucan chains and the subsequent attachment of the oligosaccharide to the alpha-1,6 position. The polypeptide is 1,4-alpha-glucan branching enzyme GlgB (Escherichia coli O1:K1 / APEC).